Here is a 460-residue protein sequence, read N- to C-terminus: Methylenetetrahydrofolate--tRNA-(uracil-5-)-methyltransferase TrmFO (460 aa).

Residue 12 to 17 (GGGLAG) coordinates FAD.

It belongs to the MnmG family. TrmFO subfamily. It depends on FAD as a cofactor.

The protein resides in the cytoplasm. The catalysed reaction is uridine(54) in tRNA + (6R)-5,10-methylene-5,6,7,8-tetrahydrofolate + NADH + H(+) = 5-methyluridine(54) in tRNA + (6S)-5,6,7,8-tetrahydrofolate + NAD(+). It carries out the reaction uridine(54) in tRNA + (6R)-5,10-methylene-5,6,7,8-tetrahydrofolate + NADPH + H(+) = 5-methyluridine(54) in tRNA + (6S)-5,6,7,8-tetrahydrofolate + NADP(+). In terms of biological role, catalyzes the folate-dependent formation of 5-methyl-uridine at position 54 (M-5-U54) in all tRNAs. This is Methylenetetrahydrofolate--tRNA-(uracil-5-)-methyltransferase TrmFO from Crocosphaera subtropica (strain ATCC 51142 / BH68) (Cyanothece sp. (strain ATCC 51142)).